The sequence spans 487 residues: Protein nucleotidyltransferase YdiU (487 aa).

ATP contacts are provided by Gly-90, Gly-92, Arg-93, Lys-113, Asp-125, Gly-126, Arg-176, and Arg-183. The Proton acceptor role is filled by Asp-252. The Mg(2+) site is built by Asn-253 and Asp-262. An ATP-binding site is contributed by Asp-262.

The protein belongs to the SELO family. Mg(2+) is required as a cofactor. Mn(2+) serves as cofactor.

It carries out the reaction L-seryl-[protein] + ATP = 3-O-(5'-adenylyl)-L-seryl-[protein] + diphosphate. It catalyses the reaction L-threonyl-[protein] + ATP = 3-O-(5'-adenylyl)-L-threonyl-[protein] + diphosphate. The enzyme catalyses L-tyrosyl-[protein] + ATP = O-(5'-adenylyl)-L-tyrosyl-[protein] + diphosphate. The catalysed reaction is L-histidyl-[protein] + UTP = N(tele)-(5'-uridylyl)-L-histidyl-[protein] + diphosphate. It carries out the reaction L-seryl-[protein] + UTP = O-(5'-uridylyl)-L-seryl-[protein] + diphosphate. It catalyses the reaction L-tyrosyl-[protein] + UTP = O-(5'-uridylyl)-L-tyrosyl-[protein] + diphosphate. In terms of biological role, nucleotidyltransferase involved in the post-translational modification of proteins. It can catalyze the addition of adenosine monophosphate (AMP) or uridine monophosphate (UMP) to a protein, resulting in modifications known as AMPylation and UMPylation. The polypeptide is Protein nucleotidyltransferase YdiU (Pseudomonas syringae pv. syringae (strain B728a)).